Consider the following 2286-residue polypeptide: Unconventional myosin-IXAb (2286 aa).

The region spanning 16-114 (SEFTLRVYPG…YRFLLREKNL (99 aa)) is the Ras-associating domain. In terms of domain architecture, Myosin motor spans 148 to 971 (AQFVADLCSL…LRQRLQDELH (824 aa)). A helical membrane pass occupies residues 178–198 (IYTYVGSILIAVNPFKFLPIY). ATP is bound at residue 242–249 (GESGSGKT). Residues 853 to 875 (LNKLMETLGQSEPYFVKCIRSNA) form an actin-binding region. IQ domains lie at 976–996 (RRIV…HFCR), 1025–1054 (QQGA…AVLI), 1066–1095 (RNTA…AAVT), and 1089–1118 (QRRA…QQCR). Residues 976-1113 (RRIVCLQRSF…QSRQRCRILR (138 aa)) are neck or regulatory domain. The tract at residues 1114–2254 (EQQCREQSKH…PRANRSCPPK (1141 aa)) is tail. Disordered regions lie at residues 1118 to 1279 (REQS…QIRE), 1308 to 1341 (DVPL…FSVS), 1455 to 1588 (CEED…EPML), and 1732 to 1754 (DGTI…SDTV). Positions 1123–1133 (HPSTVTKSLHQ) are enriched in polar residues. Positions 1134–1149 (NTEEAEKLEEVWEKQT) are enriched in basic and acidic residues. The segment covering 1263–1273 (PINSAPQTPNR) has biased composition (polar residues). The span at 1455-1465 (CEEDEDDEYED) shows a compositional bias: acidic residues. Over residues 1485 to 1501 (CVFHSDSEMSSQKEQKR) the composition is skewed to basic and acidic residues. The segment covering 1529 to 1542 (RGKMRFWSKSKHGD) has biased composition (basic residues). Composition is skewed to basic and acidic residues over residues 1550 to 1562 (RSAD…RRND) and 1572 to 1585 (GVSE…ENRE). A Phorbol-ester/DAG-type zinc finger spans residues 1759–1808 (GHIFKSTQYSIPTYCEFCSSLIWMMDKACVCKLCRYACHKKCCLRMTTKC). The region spanning 1823–2011 (VELSRLTSDE…LIICEQMRKY (189 aa)) is the Rho-GAP domain. Residues 2032 to 2049 (LTHIRRSMGKSRARKSGH) are compositionally biased toward basic residues. Disordered regions lie at residues 2032-2087 (LTHI…QQEE) and 2113-2286 (PRAS…EFMV). Positions 2080–2107 (QAAMQQEEKVLTQQIENLQKEKEELTYE) form a coiled coil. Composition is skewed to low complexity over residues 2176–2192 (SLDS…SVSS) and 2200–2211 (SSSSGPLFSSSS). Residues 2226 to 2238 (EQASLSARCASSS) show a composition bias toward polar residues. The span at 2254–2270 (KPREPGDTGGRRREHEF) shows a compositional bias: basic and acidic residues.

This sequence belongs to the TRAFAC class myosin-kinesin ATPase superfamily. Myosin family.

Its subcellular location is the membrane. It localises to the cytoplasm. The protein localises to the synapse. The protein resides in the cell projection. It is found in the growth cone. Functionally, myosins are actin-based motor molecules with ATPase activity. Unconventional myosins serve in intracellular movements. Regulates Rho by stimulating it's GTPase activity in neurons. Required for the regulation of neurite branching and motor neuron axon guidance. This chain is Unconventional myosin-IXAb (myo9ab), found in Danio rerio (Zebrafish).